Here is a 198-residue protein sequence, read N- to C-terminus: Molybdenum cofactor guanylyltransferase (198 aa).

Residues 14-16 (LAG), K27, D73, and D103 contribute to the GTP site. Residue D103 coordinates Mg(2+).

This sequence belongs to the MobA family. In terms of assembly, monomer. Requires Mg(2+) as cofactor.

It is found in the cytoplasm. The catalysed reaction is Mo-molybdopterin + GTP + H(+) = Mo-molybdopterin guanine dinucleotide + diphosphate. In terms of biological role, transfers a GMP moiety from GTP to Mo-molybdopterin (Mo-MPT) cofactor (Moco or molybdenum cofactor) to form Mo-molybdopterin guanine dinucleotide (Mo-MGD) cofactor. The sequence is that of Molybdenum cofactor guanylyltransferase from Pseudomonas aeruginosa (strain ATCC 15692 / DSM 22644 / CIP 104116 / JCM 14847 / LMG 12228 / 1C / PRS 101 / PAO1).